The chain runs to 382 residues: Na(+)/H(+) antiporter NhaA 1 (382 aa).

A run of 11 helical transmembrane segments spans residues 10-30 (EFSI…NISP), 45-65 (FSFH…IAAA), 87-107 (LLAT…LNAL), 116-136 (GWGI…SLVF), 145-165 (FLLL…ALFY), 170-190 (LPAA…AALL), 211-231 (AGLF…VPFL), 252-272 (LASF…LFGL), 275-295 (AGVT…SLVI), 326-346 (LVGL…GEAF), and 353-373 (GAAK…LAAG).

The protein belongs to the NhaA Na(+)/H(+) (TC 2.A.33) antiporter family.

Its subcellular location is the cell inner membrane. The catalysed reaction is Na(+)(in) + 2 H(+)(out) = Na(+)(out) + 2 H(+)(in). Its function is as follows. Na(+)/H(+) antiporter that extrudes sodium in exchange for external protons. The protein is Na(+)/H(+) antiporter NhaA 1 of Pelobacter propionicus (strain DSM 2379 / NBRC 103807 / OttBd1).